The chain runs to 87 residues: Small ribosomal subunit protein uS17 (87 aa).

Belongs to the universal ribosomal protein uS17 family. As to quaternary structure, part of the 30S ribosomal subunit.

One of the primary rRNA binding proteins, it binds specifically to the 5'-end of 16S ribosomal RNA. The sequence is that of Small ribosomal subunit protein uS17 from Geobacillus kaustophilus (strain HTA426).